The sequence spans 389 residues: Lipid-A-disaccharide synthase (389 aa).

It belongs to the LpxB family.

The catalysed reaction is a lipid X + a UDP-2-N,3-O-bis[(3R)-3-hydroxyacyl]-alpha-D-glucosamine = a lipid A disaccharide + UDP + H(+). It functions in the pathway bacterial outer membrane biogenesis; LPS lipid A biosynthesis. Its function is as follows. Condensation of UDP-2,3-diacylglucosamine and 2,3-diacylglucosamine-1-phosphate to form lipid A disaccharide, a precursor of lipid A, a phosphorylated glycolipid that anchors the lipopolysaccharide to the outer membrane of the cell. The polypeptide is Lipid-A-disaccharide synthase (Burkholderia cenocepacia (strain ATCC BAA-245 / DSM 16553 / LMG 16656 / NCTC 13227 / J2315 / CF5610) (Burkholderia cepacia (strain J2315))).